Consider the following 235-residue polypeptide: Claudin-16 (235 aa).

Residues 1–3 lie on the Cytoplasmic side of the membrane; that stretch reads MKD. A helical membrane pass occupies residues 4–24; sequence LLQYAACFLAIFSTGFLIVAT. At 25 to 79 the chain is on the extracellular side; that stretch reads WTDCWMVNADDSLEVSTKCRGLWWECVTNAFDGIRTCDEYDSIYAEHPLKLVVTR. A helical transmembrane segment spans residues 80–100; it reads ALMITADILAGFGFITLLLGL. Over 101–115 the chain is Cytoplasmic; that stretch reads DCVKFLPDDPQIKVR. Residues 116–136 form a helical membrane-spanning segment; that stretch reads LCFVAGTTLLIAGTPGIIGSV. Residues 137 to 169 lie on the Extracellular side of the membrane; the sequence is WYAVDVYVERSSLVLHNIFLGIQYKFGWSCWLG. A helical transmembrane segment spans residues 170–190; that stretch reads MAGSLGCFLAGALLTCCLYLF. Residues 191–235 lie on the Cytoplasmic side of the membrane; it reads KDVGPERNYPYAMRKPYSTAGVSMAKSYKAPRTETAKMYAVDTRV. The Interaction with TJP1 signature appears at 233–235; the sequence is TRV.

The protein belongs to the claudin family. As to quaternary structure, can form heteropolymeric tight junction strands with other claudins. Interacts with CLDN19. Cannot form tight junction strands on its own. Interacts (via PDZ-binding motif TRV) with TJP1 (via PDZ domain). In terms of tissue distribution, expressed in the corticomedullary axis of the TAL, specifically in the cortex and the outer stripe of outer medulla (OSOM) zone (at protein level).

It is found in the cell junction. It localises to the tight junction. Its subcellular location is the cell membrane. It carries out the reaction Mg(2+)(in) = Mg(2+)(out). The catalysed reaction is Ca(2+)(in) = Ca(2+)(out). The enzyme catalyses Na(+)(in) = Na(+)(out). It catalyses the reaction K(+)(in) = K(+)(out). It carries out the reaction Rb(+)(in) = Rb(+)(out). The catalysed reaction is Cs(+)(in) = Cs(+)(out). The enzyme catalyses Li(+)(in) = Li(+)(out). Functionally, forms paracellular channels: coassembles with CLDN19 into tight junction strands with cation-selective channels through the strands, conveying epithelial permeability in a process known as paracellular tight junction permeability. Involved in the maintenance of ion gradients along the nephron. In the thick ascending limb (TAL) of Henle's loop, facilitates sodium paracellular permeability from the interstitial compartment to the lumen, contributing to the lumen-positive transepithelial potential that drives paracellular magnesium and calcium reabsorption. This Mus musculus (Mouse) protein is Claudin-16.